The following is an 86-amino-acid chain: Small ribosomal subunit protein uS15 (86 aa).

Belongs to the universal ribosomal protein uS15 family. Part of the 30S ribosomal subunit. Forms a bridge to the 50S subunit in the 70S ribosome, contacting the 23S rRNA.

Its function is as follows. One of the primary rRNA binding proteins, it binds directly to 16S rRNA where it helps nucleate assembly of the platform of the 30S subunit by binding and bridging several RNA helices of the 16S rRNA. Forms an intersubunit bridge (bridge B4) with the 23S rRNA of the 50S subunit in the ribosome. This chain is Small ribosomal subunit protein uS15, found in Mycoplasma pneumoniae (strain ATCC 29342 / M129 / Subtype 1) (Mycoplasmoides pneumoniae).